A 772-amino-acid chain; its full sequence is Metal transporter CNNM4 (772 aa).

The Extracellular segment spans residues 1–175 (MAPGGGGGRR…SLLFMVEEHG (175 aa)). Asn120 carries an N-linked (GlcNAc...) asparagine glycan. Residues 176-196 (RFLPLWLHILLVLVLLVLSGI) traverse the membrane as a helical segment. The 181-residue stretch at 176 to 356 (RFLPLWLHIL…EPYNDLVKEE (181 aa)) folds into the CNNM transmembrane domain. Over 197–237 (FSGLNLGLMALDPMELRIVQNCGTEKERRYARKIEPIRRKG) the chain is Cytoplasmic. Positions 238–258 (NYLLCSLLLGNVLVNTSLTIL) form an intramembrane region, helical. Over 259–261 (LDN) the chain is Cytoplasmic. The helical transmembrane segment at 262 to 282 (LIGSGIMAVASSTIGIVIFGE) threads the bilayer. At 283-290 (ILPQALCS) the chain is on the extracellular side. The chain crosses the membrane as a helical span at residues 291-313 (RHGLAVGANTIVLTKIFMLLTFP). At 314–772 (LSFPISKLLD…LHRASQEGTI (459 aa)) the chain is on the cytoplasmic side. CBS domains follow at residues 375–436 (MTQL…CTPL) and 443–509 (YNHP…ILDE). The segment at 647-676 (PDRSPAHPTPLSRSASLSYPDRNTDMTPSS) is disordered. A phosphoserine mark is found at Ser658, Ser662, and Ser767.

Belongs to the ACDP family. In terms of assembly, interacts with COX11. As to expression, present in spinal cord dorsal horn neurons and in developing teeth (at protein level). In the tooth, higher expression is found in the ameloblasts during the transition and maturation phases of amelogenesis; reduced expression in the odontoblasts.

It is found in the cell membrane. Its function is as follows. Probable metal transporter. The interaction with the metal ion chaperone COX11 suggests that it may play a role in sensory neuron functions. May play a role in biomineralization and retinal function. The chain is Metal transporter CNNM4 (Cnnm4) from Rattus norvegicus (Rat).